The primary structure comprises 132 residues: N,N-dimethylformamidase alpha subunit (132 aa).

Heterotetramer of two DmfA1 (alpha) and two DmfA2 (beta) subunits.

It catalyses the reaction N,N-dimethylformamide + H2O = dimethylamine + formate. Its activity is regulated as follows. Activity is slightly inhibited by Mg(2+) and Mn(2+), and slightly increased by Cu(2+). Activity is slightly inhibited by the chelating agents 8-hydroxyquinoline, ethylenediaminetetraacetate, o-phenanthroline and 2,2'-bipyridyl. In terms of biological role, hydrolyzes N,N-dimethylformamide, and to a lesser extent N,N-dimethylacetamide and N,N-diethylacetamide. Has no activity against the substituted amides N-methylformamide, N-ethylformamide, N-ethylformamide and N-methylacetamide or the unsubstituted amides formamide, nicotinamide, acetoamide, benzamide, acetamide and acrylamide. This Alcaligenes sp protein is N,N-dimethylformamidase alpha subunit.